Reading from the N-terminus, the 789-residue chain is Bifunctional purine biosynthetic protein PUR2,5 (789 aa).

Residues 1-428 form a GARS region; it reads MEKINVLVVG…NRTDIAHRAF (428 aa). Positions 114 to 321 constitute an ATP-grasp domain; sequence KDFMKKHNIP…LLELMLATVE (208 aa). 140 to 201 serves as a coordination point for ATP; that stretch reads IANSSHNLVI…EEFLEGDELS (62 aa). Mg(2+) is bound by residues Glu-291 and Asn-293. The interval 438–773 is AIRS; that stretch reads LTYEDAGVSV…TVYTIGKLVE (336 aa).

The protein in the N-terminal section; belongs to the GARS family. It in the C-terminal section; belongs to the AIR synthase family. Mg(2+) is required as a cofactor. The cofactor is Mn(2+).

Its subcellular location is the cytoplasm. It localises to the cytosol. The enzyme catalyses 2-formamido-N(1)-(5-O-phospho-beta-D-ribosyl)acetamidine + ATP = 5-amino-1-(5-phospho-beta-D-ribosyl)imidazole + ADP + phosphate + H(+). The catalysed reaction is 5-phospho-beta-D-ribosylamine + glycine + ATP = N(1)-(5-phospho-beta-D-ribosyl)glycinamide + ADP + phosphate + H(+). Its pathway is purine metabolism; IMP biosynthesis via de novo pathway; 5-amino-1-(5-phospho-D-ribosyl)imidazole from N(2)-formyl-N(1)-(5-phospho-D-ribosyl)glycinamide: step 2/2. It functions in the pathway purine metabolism; IMP biosynthesis via de novo pathway; N(1)-(5-phospho-D-ribosyl)glycinamide from 5-phospho-alpha-D-ribose 1-diphosphate: step 2/2. In terms of biological role, catalyzes the second and fifth step in the 'de novo' purine biosynthesis pathway; contains phosphoribosylamine--glycine ligase (GARS) and phosphoribosylformylglycinamidine cyclo-ligase (AIRS) activities. The sequence is that of Bifunctional purine biosynthetic protein PUR2,5 from Pichia angusta (Yeast).